Reading from the N-terminus, the 179-residue chain is Large ribosomal subunit protein uL5 (179 aa).

It belongs to the universal ribosomal protein uL5 family. In terms of assembly, part of the 50S ribosomal subunit; part of the 5S rRNA/L5/L18/L25 subcomplex. Contacts the 5S rRNA and the P site tRNA. Forms a bridge to the 30S subunit in the 70S ribosome.

This is one of the proteins that bind and probably mediate the attachment of the 5S RNA into the large ribosomal subunit, where it forms part of the central protuberance. In the 70S ribosome it contacts protein S13 of the 30S subunit (bridge B1b), connecting the 2 subunits; this bridge is implicated in subunit movement. Contacts the P site tRNA; the 5S rRNA and some of its associated proteins might help stabilize positioning of ribosome-bound tRNAs. The chain is Large ribosomal subunit protein uL5 from Aliivibrio salmonicida (strain LFI1238) (Vibrio salmonicida (strain LFI1238)).